Reading from the N-terminus, the 126-residue chain is Large ribosomal subunit protein bL12 (126 aa).

The protein belongs to the bacterial ribosomal protein bL12 family. In terms of assembly, homodimer. Part of the ribosomal stalk of the 50S ribosomal subunit. Forms a multimeric L10(L12)X complex, where L10 forms an elongated spine to which 2 to 4 L12 dimers bind in a sequential fashion. Binds GTP-bound translation factors.

Its function is as follows. Forms part of the ribosomal stalk which helps the ribosome interact with GTP-bound translation factors. Is thus essential for accurate translation. This is Large ribosomal subunit protein bL12 from Francisella tularensis subsp. mediasiatica (strain FSC147).